The sequence spans 362 residues: Poly(rC)-binding protein 2 (362 aa).

2 KH domains span residues 13 to 75 (TLTI…FAMI) and 97 to 162 (PVTL…VKQI). K115 participates in a covalent cross-link: Glycyl lysine isopeptide (Lys-Gly) (interchain with G-Cter in SUMO2). S169 is subject to Phosphoserine. Residue K181 forms a Glycyl lysine isopeptide (Lys-Gly) (interchain with G-Cter in SUMO2) linkage. A phosphoserine mark is found at S185 and S268. One can recognise a KH 3 domain in the interval 284 to 348 (TTSHELTIPN…ASISLAQYLI (65 aa)). K319 participates in a covalent cross-link: Glycyl lysine isopeptide (Lys-Gly) (interchain with G-Cter in SUMO2). 2 positions are modified to phosphoserine: S361 and S362.

Identified in a mRNP complex, at least composed of DHX9, DDX3X, ELAVL1, HNRNPU, IGF2BP1, ILF3, PABPC1, PCBP2, PTBP2, STAU1, STAU2, SYNCRIP and YBX1. Interacts with IFIH1 and RNF135. Interacts with MAVS (via C-terminus) and ITCH (via WW domains). Interacts with CGAS; preventing the formation of liquid-like droplets in which CGAS is activated. Post-translationally, phosphorylated. The non-phosphorylated form(s) exhibited the strongest poly(rC)-binding activity.

It is found in the nucleus. The protein localises to the cytoplasm. Its function is as follows. Single-stranded nucleic acid binding protein that binds preferentially to oligo dC. Major cellular poly(rC)-binding protein. Also binds poly(rU). Acts as a negative regulator of antiviral signaling. Negatively regulates cellular antiviral responses mediated by MAVS signaling. It acts as an adapter between MAVS and the E3 ubiquitin ligase ITCH, therefore triggering MAVS ubiquitination and degradation. Negativeley regulates the cGAS-STING pathway via interaction with CGAS, preventing the formation of liquid-like droplets in which CGAS is activated. Together with PCBP1, required for erythropoiesis, possibly by regulating mRNA splicing. In Mus musculus (Mouse), this protein is Poly(rC)-binding protein 2 (Pcbp2).